The sequence spans 116 residues: Iron-sulfur cluster insertion protein ErpA (116 aa).

Iron-sulfur cluster is bound by residues cysteine 44, cysteine 108, and cysteine 110.

This sequence belongs to the HesB/IscA family. Homodimer. Iron-sulfur cluster serves as cofactor.

Required for insertion of 4Fe-4S clusters for at least IspG. The chain is Iron-sulfur cluster insertion protein ErpA from Shewanella baltica (strain OS223).